Reading from the N-terminus, the 245-residue chain is Probable histone chaperone asf-1-like protein (245 aa).

Positions 157–166 (EDPVAEPVDE) are enriched in acidic residues. The tract at residues 157–245 (EDPVAEPVDE…SGDVEMGDKH (89 aa)) is disordered. The span at 167-183 (EANKVFDEDDLMPLHDD) shows a compositional bias: basic and acidic residues. Positions 184-206 (GQDDDEEEEDDDETGPNTEEVDL) are enriched in acidic residues. A compositionally biased stretch (basic and acidic residues) spans 215–245 (ANAHDGTEQKNGEESMEHDGASGDVEMGDKH).

This sequence belongs to the ASF1 family. As to quaternary structure, interacts with histone H3 and histone H4.

The protein localises to the nucleus. In terms of biological role, histone chaperone that facilitates histone deposition and histone exchange and removal during nucleosome assembly and disassembly. The chain is Probable histone chaperone asf-1-like protein (asfl-1) from Caenorhabditis elegans.